Here is a 203-residue protein sequence, read N- to C-terminus: Kunitz trypsin inhibitor 6 (203 aa).

The N-terminal stretch at 1–21 is a signal peptide; sequence MKTFQLMMISFLFVAITTTSG. Residues Cys70 and Cys115 are joined by a disulfide bond. Asn94, Asn127, Asn136, Asn144, and Asn197 each carry an N-linked (GlcNAc...) asparagine glycan.

Belongs to the protease inhibitor I3 (leguminous Kunitz-type inhibitor) family.

In terms of biological role, exhibits Kunitz trypsin protease inhibitor activity. The polypeptide is Kunitz trypsin inhibitor 6 (Arabidopsis thaliana (Mouse-ear cress)).